A 1184-amino-acid chain; its full sequence is DNA polymerase III subunit alpha (1184 aa).

Belongs to the DNA polymerase type-C family. DnaE subfamily. The Pol III holoenzyme complex contains at least 10 different subunits organized into 3 functionally essential subassemblies: the Pol III core, the beta sliding clamp processivity factor and the clamp-loading complex. The Pol III core (subunits alpha, epsilon and theta) contains the polymerase and the 3'-5' exonuclease proofreading activities. The polymerase is tethered to the template via the dimeric beta sliding clamp processivity factor. The clamp loader (also called gamma complex) assembles the beta sliding clamp onto the primed template and plays a central role in the organization and communication at the replication fork. The clamp-loading complex contains delta, delta', psi and chi, and 3 copies of either or both of two different DnaX proteins, gamma and tau. The DNA replisome complex has a single clamp loader (3 tau and 1 each of delta, delta', psi and chi subunits) which binds 3 Pol III cores (1 core on the leading strand and 2 on the lagging strand) each with a beta sliding clamp dimer. Interacts with the beta-sliding clamp (DnaN). Co-immunoprecipitates with DarG in the presence and absence of darT.

The protein resides in the cytoplasm. The catalysed reaction is DNA(n) + a 2'-deoxyribonucleoside 5'-triphosphate = DNA(n+1) + diphosphate. DNA polymerase III is a complex, multichain enzyme responsible for most of the replicative synthesis in bacteria. Pol III also exhibits 3' to 5' exonuclease activity. The alpha chain is the DNA polymerase. The sequence is that of DNA polymerase III subunit alpha (dnaE1) from Mycobacterium tuberculosis (strain ATCC 25618 / H37Rv).